We begin with the raw amino-acid sequence, 866 residues long: Protein aubergine (866 aa).

Met1 is modified (N-acetylmethionine). A disordered region spans residues 1–61; the sequence is MNLPPNPVIA…GGGDAQVGPS (61 aa). Symmetric dimethylarginine is present on residues Arg11, Arg13, Arg15, and Arg17. Gly residues predominate over residues 46 to 56; that stretch reads ASGGNGGGGDA. The region spanning 281 to 390 is the PAZ domain; that stretch reads TLYNILSDAI…IIPELARATG (110 aa). The 298-residue stretch at 555 to 852 folds into the Piwi domain; the sequence is IVMVVMRSPN…LAFLVAESIN (298 aa).

It belongs to the argonaute family. Piwi subfamily. As to quaternary structure, component of the ping-pong piRNA processing (4P) complex consisting of krimp, aub and AGO3. Interacts (via N-terminus when symmetrically dimethylated on arginine residues) with krimp (via tudor domain); this interaction requires methylation of at least one N-terminal arginie residue. Interacts with vas and AGO3. May form part of a piRNA processing complex consisting of tud, aub and AGO3. Interacts (when symmetrically dimethylated on arginine residues) with tud; methylation and/or interaction requires association with piRNA. Interacts (via N-terminus and when associated with piRNA) with csul/PRMT5; the interaction recruits the PRMT5 methylosome complex to modify N-terminal arginines by symmetrical dimethylation but involves residues other than the arginines to be modified. Forms a complex with smg, twin, AGO3, nanos mRNA and piRNAs that targets the nanos 3'-untranslated region, in early embryos. Interacts with nanos mRNA and rump (in an RNA-dependent manner). Interacts with papi and vret. Interacts with me31B. Symmetrical dimethylation of arginines (sDMA) on Arg-11, Arg-13 and/or Arg-15 by csul/PRMT5/DART5, is required for binding to tud, localization to the pole plasm and association with the correct piRNAs. SDMA on Arg-11, Arg-13, Arg-15 and/or Arg-17 is required for binding to krimp and stable recruitment to subregions of the nuage. Methylation state does not affect protein stability. SDMA plays an important role in ping-pong amplification of piRNAs and is essential for function in vivo. Methylation state functions as an indicator of its piRNA binding state. PiRNA binding promotes sDMA modification; piRNA binding induces a conformational change that exposes the N-terminal arginines, making them available to the methylosome complex. As to expression, expressed in ovary. In the germarium, found in germline stem and cyst cells. In egg chambers from stage 6, expressed both in nurse cells and oocytes. In embryos, accumulates in the pole cells, although low expression is detected throughout the entire embryo. In testis, expressed in germline stem cells, gonialblast and spermatogonia cells (at protein level). In the adult brain, expressed in the ellipsoid body, the mushroom body subdivision in the peduncle and the cell body layer. Expressed specifically in alpha'/beta' and gamma neurons.

The protein localises to the cytoplasm. It localises to the cytosol. The protein resides in the perinuclear region. It is found in the cytoplasmic ribonucleoprotein granule. Component of the perinuclear meiotic nuage, a germline-specific subcellular membraneless ribonucleoprotein compartment involved in production of transposable element-repressing Piwi-interacting RNA (piRNA)-induced silencing complexes (piRISCs), which are essential for maintaining germline integrity during oogenesis; essential for the formation and/or structural integrity of nuage particles. Acts via the Piwi-interacting RNA (piRNA) metabolic process, which mediates the repression of transposable elements during meiosis by forming complexes composed of piRNAs and Piwi proteins and governs the methylation and subsequent repression of transposons. Directly binds piRNAs, a class of 24 to 30 nucleotide RNAs that are generated by a Dicer-independent mechanism and are primarily derived from transposons and other repeated sequence elements. Shows RNA cleavage or slicer activity; including aub-piRNA complexes from ovary and testis. When loaded with guide piRNAs recognizes and cleaves complementary RNAs to repress their expression and produce complementary piRNAs. Together with Piwi protein AGO3 recruited to subregions of the perinuclear nuage by krimp, which coordinates their activity in the ping-pong amplification step of secondary piRNA biogenesis. Krimp recruits piRNA bound aub and unbound AGO3, bringing them into close proximity to facilitate the loading onto AGO3 of freshly cut piRNAs generated by aub cleavage of target sequences; krimp recognizes the piRNA loading state of the Piwi proteins via symmetrically dimethylated arginine modification in their N-terminus. Important for asymmetric ping-pong amplification to bias production towards antisense piRNAs capable of silencing transposable elements. Required for the localization of mael and krimp to the meiotic nuage. In ovary, associates predominantly with antisense piRNAs that contain uridine at their 5' end. In testis, associates with Su(Ste) antisense piRNAs (most abundant class of piRNAs found in complex with aub in testes) and negatively regulates Ste expression, most likely by cleaving its transcripts. Also in testis, may repress translation of vas when associated with a piRNA derived from chromosome X, termed AT-chX-1, whose sequence shows strong complementarity to vas mRNA. Involved in repression of long interspersed nuclear elements (LINEs) including HeT-A, I-element and TART LINEs. Repression of specialized telomeric retroelements HeT-A and TART is involved in telomere regulation; Drosophila telomeres being maintained by transposition of specialized telomeric retroelements. Also involved in telomeric trans-silencing, a repression mechanism by which a transposon or a transgene inserted in subtelomeric heterochromatin has the capacity to repress in trans, in the female germline, a homologous transposon, or transgene located in euchromatin. Involved in the suppression of meiotic drive of sex chromosomes and autosomes. Involved in transposon silencing in the adult brain. Required for dorsal-ventral as well as anterior-posterior patterning of the egg. Required during oogenesis for primordial germ cell formation and activation of RNA interference. During early oogenesis, required for osk mRNA silencing and polarization of the microtubule cytoskeleton. During mid-oogenesis, required for osk mRNA localization to the posterior pole and efficient translation of osk and grk. During embryogenesis, required for posterior localization of nanos (nos) mRNA, independently of osk, and pole cell formation. Forms a complex with smg, twin, AGO3 and specific piRNAs that targets nanos mRNA (and probably other maternal mRNAS) for deadenylation promoting its decay during early embryogenesis. The polypeptide is Protein aubergine (Drosophila melanogaster (Fruit fly)).